Reading from the N-terminus, the 90-residue chain is Bombyxin B-12 (90 aa).

The signal sequence occupies residues 1–20 (MMKTTIMFMLVVVISLTYSS). Disulfide bonds link Cys-30–Cys-76, Cys-42–Cys-89, and Cys-75–Cys-80. The propeptide at 49–67 (SGAQYAPYFWTRQYLGSRG) is c peptide like.

It belongs to the insulin family. Heterodimer of a B chain and an A chain linked by two disulfide bonds.

It localises to the secreted. Its function is as follows. Brain peptide responsible for activation of prothoracic glands to produce ecdysone in insects. In Bombyx mori (Silk moth), this protein is Bombyxin B-12 (BBXB12).